Consider the following 221-residue polypeptide: Ribosomal RNA small subunit methyltransferase G (221 aa).

Residues Gly-83, Phe-88, 132-133 (LE), and Arg-146 each bind S-adenosyl-L-methionine.

This sequence belongs to the methyltransferase superfamily. RNA methyltransferase RsmG family.

It localises to the cytoplasm. It catalyses the reaction guanosine(527) in 16S rRNA + S-adenosyl-L-methionine = N(7)-methylguanosine(527) in 16S rRNA + S-adenosyl-L-homocysteine. Specifically methylates the N7 position of guanine in position 527 of 16S rRNA. The chain is Ribosomal RNA small subunit methyltransferase G from Zymomonas mobilis subsp. mobilis (strain ATCC 31821 / ZM4 / CP4).